Consider the following 179-residue polypeptide: CASP-like protein 5A2 (179 aa).

The segment at 1–24 is disordered; it reads MNVSHASVHPVEDPPAAATEVENP. At 1-38 the chain is on the cytoplasmic side; the sequence is MNVSHASVHPVEDPPAAATEVENPPRVRMDDMEGMPGT. The chain crosses the membrane as a helical span at residues 39 to 59; sequence LLGLALRFFQFLFAAAALCVM. The Extracellular portion of the chain corresponds to 60–70; it reads ASTSDFPSVTA. Residues 71–91 form a helical membrane-spanning segment; sequence FCYLVAATGLQSLWSLALAMV. At 92 to 115 the chain is on the cytoplasmic side; the sequence is DVYAIMVKRSLQNRRLVSLFAIGD. The chain crosses the membrane as a helical span at residues 116–136; it reads GVTSTLTFAAACASAGITVLI. Residues 137–155 lie on the Extracellular side of the membrane; that stretch reads DNDLNSCAQNHCVQFETST. A helical membrane pass occupies residues 156 to 176; sequence ALAFISWFAALPSFLFNFWSL. The Cytoplasmic segment spans residues 177-179; it reads ASR.

Belongs to the Casparian strip membrane proteins (CASP) family. In terms of assembly, homodimer and heterodimers.

It localises to the cell membrane. The polypeptide is CASP-like protein 5A2 (Arabidopsis thaliana (Mouse-ear cress)).